The sequence spans 4753 residues: Dynein heavy chain domain-containing protein 1 (4753 aa).

Coiled coils occupy residues 826-858 and 936-991; these read IHAI…ALHE and KLQQ…LSEL. The interval 2688–2766 is disordered; that stretch reads HLGKDHQESE…SRGMKESISH (79 aa). Positions 2695 to 2712 are enriched in acidic residues; the sequence is ESEEEEEEERVPEVESEG. Positions 2740-2751 are enriched in polar residues; it reads RVSNSRDPSLTP. 3 coiled-coil regions span residues 3125–3227, 3590–3651, and 4431–4460; these read LQQQ…MSKA, MRNQ…QGSK, and GAQL…LTHV. The segment at 3580 to 3657 is disordered; that stretch reads ALTEGRGKGL…QGSKPAYETQ (78 aa). Acidic residues predominate over residues 3602–3615; sequence KEEDDESEESNEAE. Residues 3616–3631 show a composition bias toward basic and acidic residues; the sequence is DQTKEQKAEERKNEQE. Over residues 3632–3641 the composition is skewed to acidic residues; it reads KEQEENEEKE. A disordered region spans residues 4669-4697; sequence ALQDSPSSQPSPLPPVSISTQAPGTSDLP.

It belongs to the dynein heavy chain family. Expressed in spermatozoa (at protein level).

It is found in the cell projection. The protein localises to the cilium. It localises to the flagellum. In terms of biological role, essential for the normal assembly and function of sperm flagella axonemes. This chain is Dynein heavy chain domain-containing protein 1 (DNHD1), found in Homo sapiens (Human).